We begin with the raw amino-acid sequence, 488 residues long: UDP-N-acetylmuramoyl-L-alanyl-D-glutamate--2,6-diaminopimelate ligase (488 aa).

Residues Leu24, Ser26, and 41-43 (HQV) each bind UDP-N-acetyl-alpha-D-muramoyl-L-alanyl-D-glutamate. Residue 113-119 (GTNGKTT) participates in ATP binding. UDP-N-acetyl-alpha-D-muramoyl-L-alanyl-D-glutamate contacts are provided by residues Asn154, 155 to 156 (TT), Ser182, Gln188, and Arg190. Lys222 is subject to N6-carboxylysine. Residues Arg386, 410-413 (DNPR), Gly461, and Glu465 each bind meso-2,6-diaminopimelate. A Meso-diaminopimelate recognition motif motif is present at residues 410–413 (DNPR).

It belongs to the MurCDEF family. MurE subfamily. The cofactor is Mg(2+). Carboxylation is probably crucial for Mg(2+) binding and, consequently, for the gamma-phosphate positioning of ATP.

The protein localises to the cytoplasm. The enzyme catalyses UDP-N-acetyl-alpha-D-muramoyl-L-alanyl-D-glutamate + meso-2,6-diaminopimelate + ATP = UDP-N-acetyl-alpha-D-muramoyl-L-alanyl-gamma-D-glutamyl-meso-2,6-diaminopimelate + ADP + phosphate + H(+). It participates in cell wall biogenesis; peptidoglycan biosynthesis. Its function is as follows. Catalyzes the addition of meso-diaminopimelic acid to the nucleotide precursor UDP-N-acetylmuramoyl-L-alanyl-D-glutamate (UMAG) in the biosynthesis of bacterial cell-wall peptidoglycan. This chain is UDP-N-acetylmuramoyl-L-alanyl-D-glutamate--2,6-diaminopimelate ligase, found in Haemophilus influenzae (strain PittEE).